The sequence spans 929 residues: Ribonucleoside-diphosphate reductase large chain (929 aa).

The ATP-cone domain occupies 1 to 92; the sequence is MYVKKRDGRQ…VSNLHKQTKK (92 aa). ATP contacts are provided by residues 5-6, 11-17, Thr-53, and Asp-57; these read KR and ERVQFDK. The GDP site is built by Ser-202 and Ser-217. Cys-218 and Cys-444 are disulfide-bonded. DTTP-binding positions include 226-228, Lys-243, Arg-256, and 263-264; these read DSI and AG. Asn-427 provides a ligand contact to GDP. Catalysis depends on Asn-427, which acts as the Proton acceptor. Catalysis depends on Cys-429, which acts as the Cysteine radical intermediate. GDP-binding positions include Glu-431 and 605–608; that span reads TAST. Catalysis depends on Glu-431, which acts as the Proton acceptor. A disordered region spans residues 789 to 904; it reads ENTSGPRPYA…RDENIYSNAP (116 aa). Residues 800–809 are compositionally biased toward polar residues; sequence TGVSGTSTPI. Positions 868–884 are enriched in basic and acidic residues; that stretch reads VKTEDIGSPLLERKEGQ. Acidic residues predominate over residues 885–894; sequence NEDVDEDSQE.

Belongs to the ribonucleoside diphosphate reductase large chain family.

It catalyses the reaction a 2'-deoxyribonucleoside 5'-diphosphate + [thioredoxin]-disulfide + H2O = a ribonucleoside 5'-diphosphate + [thioredoxin]-dithiol. With respect to regulation, under complex allosteric control mediated by deoxynucleoside triphosphates and ATP binding to separate specificity and activation sites on the large subunit. The type of nucleotide bound at the specificity site determines substrate preference. It seems probable that ATP makes the enzyme reduce CDP and UDP, dGTP favors ADP reduction and dTTP favors GDP reduction. Stimulated by ATP and inhibited by dATP binding to the activity site. Its function is as follows. Provides the precursors necessary for DNA synthesis. Catalyzes the biosynthesis of deoxyribonucleotides from the corresponding ribonucleotides. In Neurospora crassa (strain ATCC 24698 / 74-OR23-1A / CBS 708.71 / DSM 1257 / FGSC 987), this protein is Ribonucleoside-diphosphate reductase large chain (rnr-1).